A 1418-amino-acid polypeptide reads, in one-letter code: Ankyrin repeat and fibronectin type-III domain-containing protein 1 (1418 aa).

The disordered stretch occupies residues 119–236; it reads RDSVCSLPPP…DRGETPSLSE (118 aa). Positions 144 to 154 are enriched in polar residues; it reads PENTSINLSQC. Residues 171–186 show a composition bias toward low complexity; that stretch reads SASPTSSTPLRTTSTP. Residues 223–236 are compositionally biased toward basic and acidic residues; the sequence is LRDHDRGETPSLSE. ANK repeat units follow at residues 419–450 and 456–485; these read QSSE…ELDL and EGLT…KESP. A Fibronectin type-III domain is found at 556 to 652; sequence APLMVRLSVT…LSQPPSAVPS (97 aa). The tract at residues 893 to 900 is highly conserved peptide sequence; it reads GLYLGYLK. Disordered regions lie at residues 1134-1179, 1321-1343, and 1361-1418; these read VQKN…EVFL, LETP…YRQP, and KTSP…SSTL. A compositionally biased stretch (polar residues) spans 1136-1146; sequence KNDSTSSNTDY. Residues 1407-1418 show a composition bias toward polar residues; sequence NEQVSEILSSTL.

Required for vestibular-related functions. This Danio rerio (Zebrafish) protein is Ankyrin repeat and fibronectin type-III domain-containing protein 1 (ankfn1).